A 104-amino-acid chain; its full sequence is Ig lambda-2 chain C region (104 aa).

Residues 6–99 (PTLTVFPPST…EGNTVEKSLS (94 aa)) form the Ig-like domain. A disulfide bridge links C27 with C85.

The polypeptide is Ig lambda-2 chain C region (Rattus norvegicus (Rat)).